Reading from the N-terminus, the 727-residue chain is Engulfment and cell motility protein 1 (727 aa).

Tyr18 is subject to Phosphotyrosine; by HCK. 2 positions are modified to N6-acetyllysine: Lys100 and Lys105. Position 216 is a phosphotyrosine; by HCK (Tyr216). The 174-residue stretch at Ala319–Leu492 folds into the ELMO domain. A Phosphoserine modification is found at Ser344. Phosphotyrosine; by HCK is present on residues Tyr395 and Tyr511. The PH domain occupies Arg555–Asp676. Positions Pro707–Pro714 match the SH3-binding motif. Tyr720 is modified (phosphotyrosine; by HCK).

In terms of assembly, interacts directly with the SH3-domain of DOCK1 via its SH3-binding site. Probably forms a heterotrimeric complex with DOCK1 and RAC1. Interacts with PLEKHG6. Interacts with HCK (via SH3 domain). Interacts with ADGRB1. Interacts with ADGRB3. Interacts with DOCK5. Post-translationally, phosphorylated by HCK.

Its subcellular location is the cytoplasm. It localises to the cell membrane. Its function is as follows. Involved in cytoskeletal rearrangements required for phagocytosis of apoptotic cells and cell motility. Acts in association with DOCK1 and CRK. Was initially proposed to be required in complex with DOCK1 to activate Rac Rho small GTPases. May enhance the guanine nucleotide exchange factor (GEF) activity of DOCK1. The sequence is that of Engulfment and cell motility protein 1 (Elmo1) from Mus musculus (Mouse).